An 84-amino-acid polypeptide reads, in one-letter code: CDC42 small effector protein 2-A (84 aa).

Residues Cys-10 and Cys-11 are each lipidated (S-palmitoyl cysteine). One can recognise a CRIB domain in the interval 29 to 42 (IGEPTNFVHTAHVG).

Belongs to the CDC42SE/SPEC family.

Its subcellular location is the cytoplasm. It localises to the cytoskeleton. The protein resides in the cell membrane. Probably involved in the organization of the actin cytoskeleton by acting downstream of CDC42, inducing actin filament assembly. This chain is CDC42 small effector protein 2-A (cdc42se2-a), found in Xenopus laevis (African clawed frog).